The primary structure comprises 140 residues: Putative pre-16S rRNA nuclease (140 aa).

It belongs to the YqgF nuclease family.

It is found in the cytoplasm. Its function is as follows. Could be a nuclease involved in processing of the 5'-end of pre-16S rRNA. The sequence is that of Putative pre-16S rRNA nuclease from Vibrio cholerae serotype O1 (strain ATCC 39541 / Classical Ogawa 395 / O395).